A 433-amino-acid polypeptide reads, in one-letter code: Transcobalamin-1 (433 aa).

The first 23 residues, 1–23, serve as a signal peptide directing secretion; that stretch reads MRQSHQLPLVGLLLFSFIPSQLC. A globular N-terminal alpha domain region spans residues 24–310; it reads EICEVSEENY…DINKDSSCVS (287 aa). 3 cysteine pairs are disulfide-bonded: cysteine 26–cysteine 265, cysteine 105–cysteine 308, and cysteine 155–cysteine 197. 142–146 lines the cyanocob(III)alamin pocket; sequence TNYYQ. N-linked (GlcNAc...) asparagine glycosylation occurs at asparagine 160. Position 186 (aspartate 186) interacts with cyanocob(III)alamin. A glycan (N-linked (GlcNAc...) asparagine) is linked at asparagine 216. Residues asparagine 240 and glutamine 289 each contribute to the cyanocob(III)alamin site. Residues 311-332 form a flexible linker region; the sequence is ASGNFNISADEPITVTPPDSQS. N-linked (GlcNAc...) asparagine glycans are attached at residues asparagine 316, asparagine 337, asparagine 343, asparagine 349, asparagine 354, and asparagine 369. The interval 333–433 is globular C-terminal beta domain; it reads YISVNYSVRI…ENLEVRWSKY (101 aa). 385–386 contributes to the cyanocob(III)alamin binding site; it reads YI. Cysteine 388 and cysteine 393 form a disulfide bridge. Cyanocob(III)alamin-binding positions include 402–404, leucine 411, and tyrosine 433; that span reads WEL.

This sequence belongs to the eukaryotic cobalamin transport proteins family. Contains about 30% carbohydrates. In terms of tissue distribution, produced by the salivary glands of the oral cavity, in response to ingestion of food. Major constituent of secondary granules in neutrophils.

Its subcellular location is the secreted. In terms of biological role, binds vitamin B12 with femtomolar affinity and protects it from the acidic environment of the stomach. This Homo sapiens (Human) protein is Transcobalamin-1 (TCN1).